Consider the following 305-residue polypeptide: Mitochondrial distribution and morphology protein 12 (305 aa).

The region spanning 1–236 (MSVEIDWDNI…WPSWIDLDFT (236 aa)) is the SMP-LTD domain. The tract at residues 233-305 (LDFTPEDPED…RVNSNTSLEE (73 aa)) is disordered. The span at 235–248 (FTPEDPEDPEEEGR) shows a compositional bias: acidic residues. The span at 258-269 (NDGKDIEMKSGT) shows a compositional bias: basic and acidic residues. Residues 279-305 (ESVQHVSPAVTSIDQESRVNSNTSLEE) are compositionally biased toward polar residues.

This sequence belongs to the MDM12 family. As to quaternary structure, component of the ER-mitochondria encounter structure (ERMES) or MDM complex, composed of MMM1, MDM10, MDM12 and MDM34. An MMM1 homodimer associates with one molecule of MDM12 on each side in a pairwise head-to-tail manner, and the SMP-LTD domains of MMM1 and MDM12 generate a continuous hydrophobic tunnel for phospholipid trafficking.

The protein resides in the mitochondrion outer membrane. The protein localises to the endoplasmic reticulum membrane. Component of the ERMES/MDM complex, which serves as a molecular tether to connect the endoplasmic reticulum (ER) and mitochondria. Components of this complex are involved in the control of mitochondrial shape and protein biogenesis, and function in nonvesicular lipid trafficking between the ER and mitochondria. MDM12 is required for the interaction of the ER-resident membrane protein MMM1 and the outer mitochondrial membrane-resident beta-barrel protein MDM10. The MDM12-MMM1 subcomplex functions in the major beta-barrel assembly pathway that is responsible for biogenesis of all mitochondrial outer membrane beta-barrel proteins, and acts in a late step after the SAM complex. The MDM10-MDM12-MMM1 subcomplex further acts in the TOM40-specific pathway after the action of the MDM12-MMM1 complex. Essential for establishing and maintaining the structure of mitochondria and maintenance of mtDNA nucleoids. The polypeptide is Mitochondrial distribution and morphology protein 12 (Kluyveromyces lactis (strain ATCC 8585 / CBS 2359 / DSM 70799 / NBRC 1267 / NRRL Y-1140 / WM37) (Yeast)).